The following is a 403-amino-acid chain: Tyrosine--tRNA ligase (403 aa).

Positions 42-51 match the 'HIGH' region motif; the sequence is PTAPDLHLGH. A 'KMSKS' region motif is present at residues 226-230; the sequence is KMSKS. Lysine 229 is an ATP binding site. Residues 339–400 enclose the S4 RNA-binding domain; it reads LRLAGLLTAA…GKRNFARVLL (62 aa).

Belongs to the class-I aminoacyl-tRNA synthetase family. TyrS type 2 subfamily. As to quaternary structure, homodimer.

It is found in the cytoplasm. It carries out the reaction tRNA(Tyr) + L-tyrosine + ATP = L-tyrosyl-tRNA(Tyr) + AMP + diphosphate + H(+). Its function is as follows. Catalyzes the attachment of tyrosine to tRNA(Tyr) in a two-step reaction: tyrosine is first activated by ATP to form Tyr-AMP and then transferred to the acceptor end of tRNA(Tyr). In Xanthomonas euvesicatoria pv. vesicatoria (strain 85-10) (Xanthomonas campestris pv. vesicatoria), this protein is Tyrosine--tRNA ligase.